The following is a 530-amino-acid chain: MSSLRPEEARKLATAASVSPLSNCQFSGVVISSIADEQKLEFTNKYKGSCTLLCSYDSQGVVLRVVSDDDQSHVLKEYMIAADTDAAQMGRRSYAVSLDADNLVLRFASDQDQQLFRKVVENVKHLRPKSVFSQRTEESSASQYFQFYGYLSQQQNMMQDYVRTSTYQRAILGNAVDFQDKIVLDVGAGSGILSFFAVQAGAAKVYAIEASNMAQYAQQLVESNNVQHKISVIPGKIEEIELPEKVDVIISEPMGYMLYNERMLETYLHARKWLKPQGKMYPTHGDLHIAPFSDESLYSEQYNKANFWYQSAFHGVDLTTLHKEGMKEYFRQPIVDTFDIRICMAKSVRHVCDFLNDKEDDLHLISIPLEFQILQTGICHGLAFWFDVEFSGSSQNVWLSTSPTAPLTHWYQVRCLLPMPIFIKQGQTLTGRVLLEANRRQSYDVTIDLHIEGTLISSSNTLDLKNPYFRYTGAPVQAPPGTSTQSPSEQYWTQVDTQGSRNSSSMLNGGLSVNGIGDGMDITHGLMHPH.

Positions 141 to 450 (ASQYFQFYGY…QSYDVTIDLH (310 aa)) constitute an SAM-dependent MTase PRMT-type domain. Residues glutamine 154, arginine 163, glycine 187, glutamate 209, glutamate 238, and threonine 266 each contribute to the S-adenosyl-L-methionine site. Arginine 501 is modified (asymmetric dimethylarginine; by autocatalysis).

This sequence belongs to the class I-like SAM-binding methyltransferase superfamily. Protein arginine N-methyltransferase family. As to quaternary structure, homodimer. In terms of processing, the dimethylated protein is the major form.

The protein resides in the cytoplasm. It is found in the nucleus. The enzyme catalyses L-arginyl-[protein] + 2 S-adenosyl-L-methionine = N(omega),N(omega)-dimethyl-L-arginyl-[protein] + 2 S-adenosyl-L-homocysteine + 2 H(+). Functionally, methylates (mono- and asymmetric dimethylation) the guanidino nitrogens of arginyl residues in proteins. May methylate histone H3 at 'Arg-17' and activate transcription via chromatin remodeling. This is Histone-arginine methyltransferase CARMER (Art4) from Drosophila yakuba (Fruit fly).